A 381-amino-acid polypeptide reads, in one-letter code: MIISASTDYRAAAQRKLPPFLFHYADGGAYAEHTLRHNVSDLAGIALRQRVLNNMSELSLETKLFDETLSMPVALAPVGLTGMYARRGEVQAARAAAAHGIPFTMSTVSVCPIEEVAPAINRPMWFQLYVLKDRGFMRNALERAKAAGVKTLVFTVDMPVPGARYRDAHSGMSGKNGPLRRVLQAMTHPEWAWDVGVMGRPHDLGNISKYRGNPTGLADYIGWLGNNFDPSISWKDLEWIREFWDGPMIIKGILDADDARDAVKFGADGIVVSNHGGRQLDGVLSSARALPAIADAVKGDLKILADSGIRSGLDVVRMIALGADTVLIGRAFLYALAVHGQAGVKNLLELFEKEMRVAMVLTGAKSISEITRDSLVRELGA.

Residues 1–380 (MIISASTDYR…TRDSLVRELG (380 aa)) enclose the FMN hydroxy acid dehydrogenase domain. Tyrosine 24 is a binding site for substrate. FMN contacts are provided by serine 106 and glutamine 127. Residue tyrosine 129 participates in substrate binding. Residue threonine 155 coordinates FMN. Residue arginine 164 participates in substrate binding. Residue lysine 251 coordinates FMN. Histidine 275 (proton acceptor) is an active-site residue. Arginine 278 lines the substrate pocket. 306–330 (DSGIRSGLDVVRMIALGADTVLIGR) lines the FMN pocket.

It belongs to the FMN-dependent alpha-hydroxy acid dehydrogenase family. As to quaternary structure, homotetramer. It depends on FMN as a cofactor.

It localises to the cell inner membrane. It catalyses the reaction (S)-lactate + A = pyruvate + AH2. Functionally, catalyzes the conversion of L-lactate to pyruvate. Is coupled to the respiratory chain. The polypeptide is L-lactate dehydrogenase (Pseudomonas putida (strain ATCC 700007 / DSM 6899 / JCM 31910 / BCRC 17059 / LMG 24140 / F1)).